Here is a 275-residue protein sequence, read N- to C-terminus: 4,5-DOPA dioxygenase extradiol 1 (275 aa).

Positions 22, 60, 182, and 236 each coordinate Zn(2+).

It belongs to the DODA-type extradiol aromatic ring-opening dioxygenase family. It depends on Zn(2+) as a cofactor.

It carries out the reaction L-dopa + O2 = 4-(L-alanin-3-yl)-2-hydroxy-cis,cis-muconate 6-semialdehyde + H(+). It participates in pigment biosynthesis; betalain biosynthesis. Opens the cyclic ring of dihydroxy-phenylalanine (DOPA) between carbons 4 and 5, thus producing an unstable seco-DOPA that rearranges nonenzymatically to betalamic acid. This is 4,5-DOPA dioxygenase extradiol 1 from Beta vulgaris (Sugar beet).